The chain runs to 156 residues: Cyanate hydratase (156 aa).

Active-site residues include Arg96, Glu99, and Ser122.

It belongs to the cyanase family.

The enzyme catalyses cyanate + hydrogencarbonate + 3 H(+) = NH4(+) + 2 CO2. In terms of biological role, catalyzes the reaction of cyanate with bicarbonate to produce ammonia and carbon dioxide. The sequence is that of Cyanate hydratase from Pseudomonas putida (strain W619).